A 201-amino-acid polypeptide reads, in one-letter code: Glutathione peroxidase 1 (201 aa).

Position 32 is a phosphoserine (Ser32). The active site involves Sec47. Residue Sec47 is a non-standard amino acid, selenocysteine. N6-acetyllysine; alternate occurs at positions 86, 112, and 146. N6-succinyllysine; alternate is present on residues Lys86, Lys112, and Lys146. Phosphoserine is present on residues Ser195 and Ser199.

It belongs to the glutathione peroxidase family. As to quaternary structure, homotetramer. Interacts with MIEN1. In terms of processing, during periods of oxidative stress, Sec-47 may react with a superoxide radical, irreversibly lose hydroselenide and be converted to dehydroalanine.

The protein resides in the cytoplasm. It is found in the mitochondrion. The catalysed reaction is 2 glutathione + H2O2 = glutathione disulfide + 2 H2O. It catalyses the reaction a hydroperoxy polyunsaturated fatty acid + 2 glutathione = a hydroxy polyunsaturated fatty acid + glutathione disulfide + H2O. It carries out the reaction tert-butyl hydroperoxide + 2 glutathione = tert-butanol + glutathione disulfide + H2O. The enzyme catalyses cumene hydroperoxide + 2 glutathione = 2-phenylpropan-2-ol + glutathione disulfide + H2O. The catalysed reaction is (13S)-hydroperoxy-(9Z,11E)-octadecadienoate + 2 glutathione = (13S)-hydroxy-(9Z,11E)-octadecadienoate + glutathione disulfide + H2O. It catalyses the reaction (9S)-hydroperoxy-(10E,12Z)-octadecadienoate + 2 glutathione = (9S)-hydroxy-(10E,12Z)-octadecadienoate + glutathione disulfide + H2O. It carries out the reaction (5S)-hydroperoxy-(6E,8Z,11Z,14Z)-eicosatetraenoate + 2 glutathione = (5S)-hydroxy-(6E,8Z,11Z,14Z)-eicosatetraenoate + glutathione disulfide + H2O. The enzyme catalyses (12S)-hydroperoxy-(5Z,8Z,10E,14Z)-eicosatetraenoate + 2 glutathione = (12S)-hydroxy-(5Z,8Z,10E,14Z)-eicosatetraenoate + glutathione disulfide + H2O. The catalysed reaction is (12R)-hydroperoxy-(5Z,8Z,10E,14Z)-eicosatetraenoate + 2 glutathione = (12R)-hydroxy-(5Z,8Z,10E,14Z)-eicosatetraenoate + glutathione disulfide + H2O. It catalyses the reaction (15S)-hydroperoxy-(5Z,8Z,11Z,13E)-eicosatetraenoate + 2 glutathione = (15S)-hydroxy-(5Z,8Z,11Z,13E)-eicosatetraenoate + glutathione disulfide + H2O. It carries out the reaction (5S)-hydroperoxy-(6E,8Z,11Z,14Z,17Z)-eicosapentaenoate + 2 glutathione = (5S)-hydroxy-(6E,8Z,11Z,14Z,17Z)-eicosapentaenoate + glutathione disulfide + H2O. The enzyme catalyses (12S)-hydroperoxy-(5Z,8Z,10E,14Z,17Z)-eicosapentaenoate + 2 glutathione = (12S)-hydroxy-(5Z,8Z,10E,14Z,17Z)-eicosapentaenoate + glutathione disulfide + H2O. The catalysed reaction is (15S)-hydroperoxy-(5Z,8Z,11Z,13E,17Z)-eicosapentaenoate + 2 glutathione = (15S)-hydroxy-(5Z,8Z,11Z,13E,17Z)-eicosapentaenoate + glutathione disulfide + H2O. It catalyses the reaction (15S)-hydroperoxy-(11Z,13E)-eicosadienoate + 2 glutathione = (15S)-hydroxy-(11Z,13E)-eicosadienoate + glutathione disulfide + H2O. It carries out the reaction (17S)-hydroperoxy-(4Z,7Z,10Z,13Z,15E,19Z)-docosahexaenoate + 2 glutathione = (17S)-hydroxy-(4Z,7Z,10Z,13Z,15E,19Z)-docosahexaenoate + glutathione disulfide + H2O. Functionally, catalyzes the reduction of hydroperoxides in a glutathione-dependent manner thus regulating cellular redox homeostasis. Can reduce small soluble hydroperoxides such as H2O2, cumene hydroperoxide and tert-butyl hydroperoxide, as well as several fatty acid-derived hydroperoxides. In platelets catalyzes the reduction of 12-hydroperoxyeicosatetraenoic acid, the primary product of the arachidonate 12-lipoxygenase pathway. This chain is Glutathione peroxidase 1 (GPX1), found in Callithrix jacchus (White-tufted-ear marmoset).